The chain runs to 447 residues: Transcriptional enhancer factor TEF-4 (447 aa).

2 disordered regions span residues 1–46 and 183–218; these read MGEP…GVWS and TPFT…PPAW. Over residues 11–20 the composition is skewed to low complexity; it reads DDGSGWTGSE. Positions 25-40 are enriched in gly residues; the sequence is EGTGGSEGAGGDGGPD. Residues 38–114 constitute a DNA-binding region (TEA); that stretch reads GPDAEGVWSP…QVLARRKSRE (77 aa). Positions 172–447 are transcriptional activation; that stretch reads WNVPDVKPFS…QHHIYRLVRD (276 aa). The segment covering 183–206 has biased composition (low complexity); sequence TPFTLSLTPPSTDLPGYEPPQALS. A compositionally biased stretch (pro residues) spans 207–216; sequence PLPPPTPSPP.

As to quaternary structure, interacts with YAP1 and WWTR1/TAZ.

The protein localises to the nucleus. Transcription factor which plays a key role in the Hippo signaling pathway, a pathway involved in organ size control and tumor suppression by restricting proliferation and promoting apoptosis. The core of this pathway is composed of a kinase cascade wherein MST1/MST2, in complex with its regulatory protein SAV1, phosphorylates and activates LATS1/2 in complex with its regulatory protein MOB1, which in turn phosphorylates and inactivates YAP1 oncoprotein and WWTR1/TAZ. Acts by mediating gene expression of YAP1 and WWTR1/TAZ, thereby regulating cell proliferation, migration and epithelial mesenchymal transition (EMT) induction. Binds to the SPH and GT-IIC 'enhansons' (5'-GTGGAATGT-3'). May be involved in the gene regulation of neural development. Binds to the M-CAT motif. The polypeptide is Transcriptional enhancer factor TEF-4 (TEAD2) (Homo sapiens (Human)).